The chain runs to 169 residues: Hydroperoxy fatty acid reductase gpx1 (169 aa).

Cysteine 41 is an active-site residue.

It belongs to the glutathione peroxidase family. In terms of assembly, monomer.

It carries out the reaction a hydroperoxy polyunsaturated fatty acid + NADPH + H(+) = a hydroxy polyunsaturated fatty acid + NADP(+) + H2O. With respect to regulation, mercaptosuccinate, pCMB, and nethylmaleimide act as inhibitors of the catalytic activity. Hydroperoxy fatty acid reductase essential for the removal of lipid hydroperoxides under normal and stress conditions, leading to the protection of membrane integrity. This chain is Hydroperoxy fatty acid reductase gpx1 (gpx1), found in Synechocystis sp. (strain ATCC 27184 / PCC 6803 / Kazusa).